A 294-amino-acid chain; its full sequence is StAR-related lipid transfer protein 3 (294 aa).

Residues 1–66 form the MENTAL domain; the sequence is DGYICNNGMD…YSPPESLAGS (66 aa). The short motif at 55 to 61 is the FFAT element; the sequence is QFYSPPE. Residues 58 to 77 form a disordered region; that stretch reads SPPESLAGSEEDLDEEGLGR. The START domain maps to 79–292; that stretch reads AVSPQEKALV…LRQRIRDLRS (214 aa).

It belongs to the STARD3 family. Homodimer. Phosphorylated. Phosphorylation allows the tethering of two membranes that participates in the formation of ER-endosome contacts. Phosphorylation of FFAT motif drives membrane tethering between the endoplasmic reticulum and late endosomes that in turn allows the efficient transport of sterol mediated by the START domain.

The protein resides in the late endosome membrane. It catalyses the reaction cholesterol(in) = cholesterol(out). Sterol-binding protein that mediates cholesterol transport from the endoplasmic reticulum to endosomes. The sterol transport mechanism is triggered by phosphorylation of FFAT motif that leads to membrane tethering between the endoplasmic reticulum and late endosomes. Acts as a lipid transfer protein that redirects sterol to the endosome at the expense of the cell membrane and favors membrane formation inside endosomes. This is StAR-related lipid transfer protein 3 from Salvelinus fontinalis (Brook trout).